A 192-amino-acid polypeptide reads, in one-letter code: Peptidyl-tRNA hydrolase (192 aa).

Tyr14 is a binding site for tRNA. His19 functions as the Proton acceptor in the catalytic mechanism. Residues Tyr64, Asn66, and Asn112 each contribute to the tRNA site.

The protein belongs to the PTH family. Monomer.

Its subcellular location is the cytoplasm. The catalysed reaction is an N-acyl-L-alpha-aminoacyl-tRNA + H2O = an N-acyl-L-amino acid + a tRNA + H(+). Its function is as follows. Hydrolyzes ribosome-free peptidyl-tRNAs (with 1 or more amino acids incorporated), which drop off the ribosome during protein synthesis, or as a result of ribosome stalling. In terms of biological role, catalyzes the release of premature peptidyl moieties from peptidyl-tRNA molecules trapped in stalled 50S ribosomal subunits, and thus maintains levels of free tRNAs and 50S ribosomes. This Anaeromyxobacter sp. (strain K) protein is Peptidyl-tRNA hydrolase.